The sequence spans 512 residues: Rab11 family-interacting protein 2 (512 aa).

One can recognise a C2 domain in the interval 1–120 (MMLSEQAQKW…DKQRRKTEWF (120 aa)). Residues 15 to 102 (VQVTVLQAKD…GLDKFLGQVA (88 aa)) are necessary for its cellular translocation to the plasma membrane. Disordered stretches follow at residues 174–231 (RKSD…MSDL) and 263–287 (PESGSLKSPHRRTLSFDTSKLNQPG). Polar residues-rich tracts occupy residues 221 to 231 (RLSSAHSMSDL) and 277 to 287 (SFDTSKLNQPG). At Ser-227 the chain carries Phosphoserine; by MARK2. Ser-277 carries the post-translational modification Phosphoserine. The short motif at 323–325 (NPF) is the NPF 1 element. Residues 347–374 (KESKREKREKVSLFERVTGKRDSRRPDK) are compositionally biased toward basic and acidic residues. The segment at 347–390 (KESKREKREKVSLFERVTGKRDSRRPDKLNNGGSDSPCDLKSPS) is disordered. 2 short sequence motifs (NPF) span residues 406–408 (NPF) and 440–442 (NPF). Positions 437–499 (PDNNPFDATA…EETPSILRVP (63 aa)) constitute an FIP-RBD domain. The tract at residues 465-512 (ELLRRKDTHIRELEDYIDNLLVRVMEETPSILRVPYEPSRKAGKFTNS) is necessary for interaction with AP2A1, RAB11A, subcellular location, endocytosis activity and homooligomerization.

In terms of assembly, homooligomerizes in a Rab11-independent manner. Forms a heterooligomeric complex with RAB11FIP4. Interacts with AP2A1, MYO5B, RAB25 and REPS1. Interacts with RAB11A and RAB11B (activated GTP-bound form). Interacts with NPC1L1. Interacts (via NPF motifs) with EHD1 and EHD3. Interacts with TICAM2; this interaction directs RAB11FIP2 to the phagosome. Interacts with RAB14 and RAB25 (GTP-bound forms). Phosphorylation at Ser-227 by MARK2 regulates epithelial cell polarity.

It is found in the cell membrane. It localises to the recycling endosome membrane. Functionally, a Rab11 effector binding preferentially phosphatidylinositol 3,4,5-trisphosphate (PtdInsP3) and phosphatidic acid (PA) and acting in the regulation of the transport of vesicles from the endosomal recycling compartment (ERC) to the plasma membrane. Involved in insulin granule exocytosis. Also involved in receptor-mediated endocytosis and membrane trafficking of recycling endosomes, probably originating from clathrin-coated vesicles. Required in a complex with MYO5B and RAB11 for the transport of NPC1L1 to the plasma membrane. Also acts as a regulator of cell polarity. Plays an essential role in phagocytosis through a mechanism involving TICAM2, RAC1 and CDC42 Rho GTPases for controlling actin-dynamics. The sequence is that of Rab11 family-interacting protein 2 (Rab11fip2) from Mus musculus (Mouse).